We begin with the raw amino-acid sequence, 162 residues long: NADH-quinone oxidoreductase subunit I (162 aa).

2 consecutive 4Fe-4S ferredoxin-type domains span residues 52 to 82 and 93 to 122; these read LRRYPNGEERCIACKLCEAICPAQAITIEAG and VRYDIDMVKCIYCGLCQEACPVDAIVEGPN. [4Fe-4S] cluster contacts are provided by cysteine 62, cysteine 65, cysteine 68, cysteine 72, cysteine 102, cysteine 105, cysteine 108, and cysteine 112.

It belongs to the complex I 23 kDa subunit family. As to quaternary structure, NDH-1 is composed of 14 different subunits. Subunits NuoA, H, J, K, L, M, N constitute the membrane sector of the complex. [4Fe-4S] cluster is required as a cofactor.

It is found in the cell inner membrane. It carries out the reaction a quinone + NADH + 5 H(+)(in) = a quinol + NAD(+) + 4 H(+)(out). In terms of biological role, NDH-1 shuttles electrons from NADH, via FMN and iron-sulfur (Fe-S) centers, to quinones in the respiratory chain. The immediate electron acceptor for the enzyme in this species is believed to be ubiquinone. Couples the redox reaction to proton translocation (for every two electrons transferred, four hydrogen ions are translocated across the cytoplasmic membrane), and thus conserves the redox energy in a proton gradient. The chain is NADH-quinone oxidoreductase subunit I from Nitrobacter hamburgensis (strain DSM 10229 / NCIMB 13809 / X14).